The chain runs to 557 residues: Dihydroxy-acid dehydratase (557 aa).

Mg(2+) is bound at residue Asp-78. A [2Fe-2S] cluster-binding site is contributed by Cys-119. The Mg(2+) site is built by Asp-120 and Lys-121. Residue Lys-121 is modified to N6-carboxylysine. Position 191 (Cys-191) interacts with [2Fe-2S] cluster. Glu-442 serves as a coordination point for Mg(2+). The active-site Proton acceptor is Ser-468.

The protein belongs to the IlvD/Edd family. As to quaternary structure, homodimer. [2Fe-2S] cluster serves as cofactor. It depends on Mg(2+) as a cofactor.

It catalyses the reaction (2R)-2,3-dihydroxy-3-methylbutanoate = 3-methyl-2-oxobutanoate + H2O. The catalysed reaction is (2R,3R)-2,3-dihydroxy-3-methylpentanoate = (S)-3-methyl-2-oxopentanoate + H2O. Its pathway is amino-acid biosynthesis; L-isoleucine biosynthesis; L-isoleucine from 2-oxobutanoate: step 3/4. The protein operates within amino-acid biosynthesis; L-valine biosynthesis; L-valine from pyruvate: step 3/4. In terms of biological role, functions in the biosynthesis of branched-chain amino acids. Catalyzes the dehydration of (2R,3R)-2,3-dihydroxy-3-methylpentanoate (2,3-dihydroxy-3-methylvalerate) into 2-oxo-3-methylpentanoate (2-oxo-3-methylvalerate) and of (2R)-2,3-dihydroxy-3-methylbutanoate (2,3-dihydroxyisovalerate) into 2-oxo-3-methylbutanoate (2-oxoisovalerate), the penultimate precursor to L-isoleucine and L-valine, respectively. The sequence is that of Dihydroxy-acid dehydratase from Lachnospira eligens (strain ATCC 27750 / DSM 3376 / VPI C15-48 / C15-B4) (Eubacterium eligens).